The following is a 396-amino-acid chain: MPVVLVVNSGSSSFKYQLIEMDTETVLASGLVERIGEEVGSTRHKAGGDSWERELPIADHTAGFQAMLDAFADHGPSLEEGPPVAIGHRVVHGGDVFVEPTVVTEKVKADIDDLSALAPLHNPGALQGIQAAQTAFPDVAHVAVFDTAFHQTLPAEAYTYAIDRELAAAHRIRRYGFHGTSHKYVSEAAARLLGKPLEETRIIVLHLGNGASAAAVQGGRSIDTSMGLTPLEGLVMGTRSGDIDPAILFHLARHTDLGLDDLETLLNRKSGLLGLTGLGDMRDVQRAAADGDEDAQTALGVYRHRIRHYVGAYAAQLGGVDAVVFTAGVGENNPLVRRRSLAGLEFMGIGIDDDRNELISSEARFVSPDGSPVAVLVIPTDEELEIARQSLAATGN.

Asparagine 8 serves as a coordination point for Mg(2+). Lysine 15 is an ATP binding site. Arginine 89 provides a ligand contact to substrate. Aspartate 146 acts as the Proton donor/acceptor in catalysis. Residues histidine 206–glycine 210, aspartate 280–arginine 282, and glycine 328–asparagine 332 each bind ATP. Residue glutamate 382 participates in Mg(2+) binding.

Belongs to the acetokinase family. As to quaternary structure, homodimer. Mg(2+) is required as a cofactor. Requires Mn(2+) as cofactor.

It is found in the cytoplasm. The catalysed reaction is acetate + ATP = acetyl phosphate + ADP. It participates in metabolic intermediate biosynthesis; acetyl-CoA biosynthesis; acetyl-CoA from acetate: step 1/2. In terms of biological role, catalyzes the formation of acetyl phosphate from acetate and ATP. Can also catalyze the reverse reaction. This chain is Acetate kinase, found in Clavibacter sepedonicus (Clavibacter michiganensis subsp. sepedonicus).